We begin with the raw amino-acid sequence, 440 residues long: Chromosome partition protein MukF (440 aa).

The tract at residues 208 to 236 (LSETSGTLRELQDTLEAAGDKLQANLLRI) is leucine-zipper.

The protein belongs to the MukF family. Interacts, and probably forms a ternary complex, with MukE and MukB via its C-terminal region. The complex formation is stimulated by calcium or magnesium. It is required for an interaction between MukE and MukB.

It is found in the cytoplasm. Its subcellular location is the nucleoid. Its function is as follows. Involved in chromosome condensation, segregation and cell cycle progression. May participate in facilitating chromosome segregation by condensation DNA from both sides of a centrally located replisome during cell division. Not required for mini-F plasmid partitioning. Probably acts via its interaction with MukB and MukE. Overexpression results in anucleate cells. It has a calcium binding activity. This chain is Chromosome partition protein MukF, found in Escherichia coli O157:H7.